Consider the following 287-residue polypeptide: Probable endonuclease 4 (287 aa).

Zn(2+)-binding residues include His69, His109, Glu144, Asp178, His181, His215, Asp228, His230, and Glu260.

Belongs to the AP endonuclease 2 family. Zn(2+) serves as cofactor.

It carries out the reaction Endonucleolytic cleavage to 5'-phosphooligonucleotide end-products.. Endonuclease IV plays a role in DNA repair. It cleaves phosphodiester bonds at apurinic or apyrimidinic (AP) sites, generating a 3'-hydroxyl group and a 5'-terminal sugar phosphate. The polypeptide is Probable endonuclease 4 (Thermotoga neapolitana (strain ATCC 49049 / DSM 4359 / NBRC 107923 / NS-E)).